A 210-amino-acid chain; its full sequence is Small ribosomal subunit protein uS5 (210 aa).

Basic and acidic residues predominate over residues Met-1–Asn-23. Positions Met-1–Glu-40 are disordered. Residues Phe-41–Ile-104 form the S5 DRBM domain.

This sequence belongs to the universal ribosomal protein uS5 family. Part of the 30S ribosomal subunit. Contacts proteins S4 and S8.

With S4 and S12 plays an important role in translational accuracy. Functionally, located at the back of the 30S subunit body where it stabilizes the conformation of the head with respect to the body. This Paramagnetospirillum magneticum (strain ATCC 700264 / AMB-1) (Magnetospirillum magneticum) protein is Small ribosomal subunit protein uS5.